A 327-amino-acid chain; its full sequence is Interleukin-12 subunit beta (327 aa).

An N-terminal signal peptide occupies residues 1–22 (MCLQQLVISWVSLVWLASPLLA). One can recognise an Ig-like C2-type domain in the interval 23 to 106 (IWELEKNVYV…LSQMLLLLHK (84 aa)). The cysteines at positions 50 and 90 are disulfide-linked. 2 N-linked (GlcNAc...) asparagine glycosylation sites follow: asparagine 134 and asparagine 152. One can recognise a Fibronectin type-III domain in the interval 237–327 (PPKNLKMKPS…WSEWATMSCP (91 aa)).

It belongs to the IL-12B family. Heterodimer with IL12A; disulfide-linked. The heterodimer is known as interleukin IL-12. Heterodimer with IL23A; disulfide-linked. The heterodimer is known as interleukin IL-23. Also secreted as a monomer. Interacts with NBR1; this interaction promotes IL-12 secretion.

The protein localises to the secreted. In terms of biological role, cytokine that can act as a growth factor for activated T and NK cells, enhance the lytic activity of NK/lymphokine-activated killer cells, and stimulate the production of IFN-gamma by resting PBMC. Its function is as follows. Associates with IL23A to form the IL-23 interleukin, a heterodimeric cytokine which functions in innate and adaptive immunity. IL-23 may constitute with IL-17 an acute response to infection in peripheral tissues. IL-23 binds to a heterodimeric receptor complex composed of IL12RB1 and IL23R, activates the Jak-Stat signaling cascade, stimulates memory rather than naive T-cells and promotes production of pro-inflammatory cytokines. IL-23 induces autoimmune inflammation and thus may be responsible for autoimmune inflammatory diseases and may be important for tumorigenesis. This Marmota monax (Woodchuck) protein is Interleukin-12 subunit beta (IL12B).